The following is a 1027-amino-acid chain: Presequence protease, mitochondrial (1027 aa).

Residues methionine 1–tryptophan 22 constitute a mitochondrion transit peptide. Histidine 98 lines the Zn(2+) pocket. The active-site Proton acceptor is the glutamate 101. Histidine 102 and glutamate 199 together coordinate Zn(2+). A disulfide bond links cysteine 113 and cysteine 550. Residues lysine 800 to threonine 829 form a disordered region. Low complexity predominate over residues serine 814–glutamate 823.

Belongs to the peptidase M16 family. PreP subfamily. As to quaternary structure, monomer and homodimer; homodimerization is induced by binding of the substrate. Requires Zn(2+) as cofactor. In terms of processing, a disulfide bond locks the enzyme in the closed conformation preventing substrate entry into the catalytic chamber.

The protein localises to the mitochondrion matrix. Its activity is regulated as follows. Mainly exists in a closed and catalytically competent conformation but a closed-to-open switch allows substrate entry into the catalytic chamber. Substrate binding induces closure and dimerization. A disulfide bond may lock the enzyme in a closed conformation preventing substrate entry into the catalytic chamber, participating in redox regulation of the enzyme. Inhibited by metal-chelating agents. Inhibited by nickel and zinc excess, and slightly activated by manganese. Its function is as follows. Metalloendopeptidase of the mitochondrial matrix that functions in peptide cleavage and degradation rather than in protein processing. Has an ATP-independent activity. Specifically cleaves peptides in the range of 5 to 65 residues. Shows a preference for cleavage after small polar residues and before basic residues, but without any positional preference. Degrades the transit peptides of mitochondrial proteins after their cleavage. Also degrades other unstructured peptides. The sequence is that of Presequence protease, mitochondrial (pitrm1) from Xenopus tropicalis (Western clawed frog).